Reading from the N-terminus, the 893-residue chain is UPF0182 protein CLM_0018 (893 aa).

The next 7 helical transmembrane spans lie at 9-29 (IPLFIIILFIAFFNKIINFII), 49-69 (AIIILMIPIFIIFFISIWMYY), 94-114 (LFFIFNFIVSIFLAYIFSSSY), 154-174 (VIISLLLFLVITTFIAYFILE), 202-222 (LAIVSGLIILFISFGHLIKIW), 246-266 (FYKIIVVITLISSIVTLLSIV), and 273-293 (VSVCIGITIFLIVSQNIASFL).

Belongs to the UPF0182 family.

It localises to the cell membrane. This Clostridium botulinum (strain Kyoto / Type A2) protein is UPF0182 protein CLM_0018.